A 389-amino-acid chain; its full sequence is Na(+)/H(+) antiporter NhaA (389 aa).

A run of 11 helical transmembrane segments spans residues isoleucine 17–leucine 37, leucine 59–valine 79, serine 95–phenylalanine 115, alanine 124–leucine 144, valine 154–phenylalanine 174, threonine 177–leucine 197, leucine 213–isoleucine 233, phenylalanine 261–leucine 281, proline 287–phenylalanine 307, isoleucine 328–leucine 348, and leucine 363–valine 383.

It belongs to the NhaA Na(+)/H(+) (TC 2.A.33) antiporter family.

Its subcellular location is the cell inner membrane. The catalysed reaction is Na(+)(in) + 2 H(+)(out) = Na(+)(out) + 2 H(+)(in). In terms of biological role, na(+)/H(+) antiporter that extrudes sodium in exchange for external protons. The polypeptide is Na(+)/H(+) antiporter NhaA (Shewanella sp. (strain MR-7)).